A 487-amino-acid polypeptide reads, in one-letter code: DNA ligase (487 aa).

The active-site N6-AMP-lysine intermediate is Lys159. Residues Arg164, Arg182, and Glu217 each coordinate ATP. Glu217 provides a ligand contact to a divalent metal cation. Residues 229 to 237 are interaction with the sliding clamp; sequence EGLDFLFDA. Residue Glu344 coordinates a divalent metal cation. ATP is bound by residues Arg359 and Lys365.

It belongs to the ATP-dependent DNA ligase family. Interacts with the sliding clamp. A divalent metal cation is required as a cofactor.

It catalyses the reaction ATP + (deoxyribonucleotide)n-3'-hydroxyl + 5'-phospho-(deoxyribonucleotide)m = (deoxyribonucleotide)n+m + AMP + diphosphate.. Functionally, DNA ligase, which is expressed in the early stage of lytic development, has been implicated in T4 DNA synthesis and genetic recombination. It may also play a role in T4 DNA repair. This is DNA ligase (30) from Enterobacteria phage T4 (Bacteriophage T4).